Here is a 580-residue protein sequence, read N- to C-terminus: Isochorismate synthase, chloroplastic (580 aa).

Residues 1–91 constitute a chloroplast transit peptide; that stretch reads MASITGHCVA…LAMERLSSAV (91 aa).

It belongs to the isochorismate synthase family. Mg(2+) serves as cofactor.

The protein resides in the plastid. Its subcellular location is the chloroplast. The catalysed reaction is chorismate = isochorismate. Not inhibited by Tyr, Phe or Trp. Functionally, involved in the synthesis of o-succinylbenzoic acid, 2,3-dihydroxybenzoic acid and salicylic acid (SA). This chain is Isochorismate synthase, chloroplastic, found in Catharanthus roseus (Madagascar periwinkle).